A 217-amino-acid polypeptide reads, in one-letter code: MSVTFEPGLLRAYFVAGSQDVPGQDLRDVLAKMLAAGITAFQFRDKATSTLTPEQRLALGRDLRAQCRVANVPFIVDDDVELALALDADGIHVGQSDQRVQQVIQAVAGRNIFVGLSCSTMAEVTAANAIAGIDYIGSGPIFPTISKADADPVVGTAGLQKLVAQSRVPVVAIGGVTVDSLPAIAETGAAGVAVITLLTHSHDVDADTAAMRQAFSK.

Residues 42 to 46 and D77 each bind 4-amino-2-methyl-5-(diphosphooxymethyl)pyrimidine; that span reads QFRDK. Mg(2+) contacts are provided by D78 and D97. S117 lines the 4-amino-2-methyl-5-(diphosphooxymethyl)pyrimidine pocket. 144-146 is a binding site for 2-[(2R,5Z)-2-carboxy-4-methylthiazol-5(2H)-ylidene]ethyl phosphate; it reads TIS. K147 contacts 4-amino-2-methyl-5-(diphosphooxymethyl)pyrimidine. Residues G175 and 195 to 196 each bind 2-[(2R,5Z)-2-carboxy-4-methylthiazol-5(2H)-ylidene]ethyl phosphate; that span reads IT.

Belongs to the thiamine-phosphate synthase family. Mg(2+) is required as a cofactor.

It carries out the reaction 2-[(2R,5Z)-2-carboxy-4-methylthiazol-5(2H)-ylidene]ethyl phosphate + 4-amino-2-methyl-5-(diphosphooxymethyl)pyrimidine + 2 H(+) = thiamine phosphate + CO2 + diphosphate. The enzyme catalyses 2-(2-carboxy-4-methylthiazol-5-yl)ethyl phosphate + 4-amino-2-methyl-5-(diphosphooxymethyl)pyrimidine + 2 H(+) = thiamine phosphate + CO2 + diphosphate. The catalysed reaction is 4-methyl-5-(2-phosphooxyethyl)-thiazole + 4-amino-2-methyl-5-(diphosphooxymethyl)pyrimidine + H(+) = thiamine phosphate + diphosphate. It participates in cofactor biosynthesis; thiamine diphosphate biosynthesis; thiamine phosphate from 4-amino-2-methyl-5-diphosphomethylpyrimidine and 4-methyl-5-(2-phosphoethyl)-thiazole: step 1/1. Condenses 4-methyl-5-(beta-hydroxyethyl)thiazole monophosphate (THZ-P) and 2-methyl-4-amino-5-hydroxymethyl pyrimidine pyrophosphate (HMP-PP) to form thiamine monophosphate (TMP). This is Thiamine-phosphate synthase from Levilactobacillus brevis (strain ATCC 367 / BCRC 12310 / CIP 105137 / JCM 1170 / LMG 11437 / NCIMB 947 / NCTC 947) (Lactobacillus brevis).